The primary structure comprises 191 residues: Fe/S biogenesis protein NfuA (191 aa).

Residues C149 and C152 each coordinate [4Fe-4S] cluster.

The protein belongs to the NfuA family. In terms of assembly, homodimer. [4Fe-4S] cluster is required as a cofactor.

Involved in iron-sulfur cluster biogenesis. Binds a 4Fe-4S cluster, can transfer this cluster to apoproteins, and thereby intervenes in the maturation of Fe/S proteins. Could also act as a scaffold/chaperone for damaged Fe/S proteins. This Salmonella choleraesuis (strain SC-B67) protein is Fe/S biogenesis protein NfuA.